We begin with the raw amino-acid sequence, 195 residues long: HTH-type transcriptional regulator BetI (195 aa).

Positions 8 to 68 (SIRRRQLIDA…ATMRDITSQL (61 aa)) constitute an HTH tetR-type domain. A DNA-binding region (H-T-H motif) is located at residues 31–50 (TIAQIARRAGVSTGIISHYF).

Its pathway is amine and polyamine biosynthesis; betaine biosynthesis via choline pathway [regulation]. Functionally, repressor involved in the biosynthesis of the osmoprotectant glycine betaine. It represses transcription of the choline transporter BetT and the genes of BetAB involved in the synthesis of glycine betaine. This chain is HTH-type transcriptional regulator BetI, found in Escherichia coli O157:H7.